Here is a 466-residue protein sequence, read N- to C-terminus: Glutamate decarboxylase alpha (466 aa).

The substrate site is built by Thr-62 and Asn-83. Residues Ser-126 to Ser-127, Thr-212, and His-275 each bind pyridoxal 5'-phosphate. Lys-276 is modified (N6-(pyridoxal phosphate)lysine).

The protein belongs to the group II decarboxylase family. In terms of assembly, homohexamer. Pyridoxal 5'-phosphate serves as cofactor.

It catalyses the reaction L-glutamate + H(+) = 4-aminobutanoate + CO2. Its function is as follows. Converts glutamate to gamma-aminobutyrate (GABA), consuming one intracellular proton in the reaction. The gad system helps to maintain a near-neutral intracellular pH when cells are exposed to extremely acidic conditions. The ability to survive transit through the acidic conditions of the stomach is essential for successful colonization of the mammalian host by commensal and pathogenic bacteria. In Escherichia coli O6:H1 (strain CFT073 / ATCC 700928 / UPEC), this protein is Glutamate decarboxylase alpha (gadA).